The sequence spans 77 residues: Conotoxin VnMEKL-0223 (77 aa).

Residues 1–19 (MQKLTILLLVAAVLMSTQA) form the signal peptide. A propeptide spanning residues 20–37 (LIKGGGEKRPKEKIKFLS) is cleaved from the precursor. Intrachain disulfides connect C51-C65, C58-C69, and C64-C74.

It belongs to the conotoxin O2 superfamily. As to expression, expressed by the venom duct.

Its subcellular location is the secreted. In Conus ventricosus (Mediterranean cone), this protein is Conotoxin VnMEKL-0223.